Reading from the N-terminus, the 416-residue chain is Multifunctional CCA protein (416 aa).

ATP-binding residues include glycine 8 and arginine 11. Residues glycine 8 and arginine 11 each contribute to the CTP site. Mg(2+) is bound by residues aspartate 21 and aspartate 23. Residues arginine 91, arginine 137, and arginine 140 each coordinate ATP. The CTP site is built by arginine 91, arginine 137, and arginine 140. Residues 228–329 form the HD domain; the sequence is TGVHTLMVLA…VKIFDKADFW (102 aa).

The protein belongs to the tRNA nucleotidyltransferase/poly(A) polymerase family. Bacterial CCA-adding enzyme type 1 subfamily. As to quaternary structure, monomer. Can also form homodimers and oligomers. Requires Mg(2+) as cofactor. It depends on Ni(2+) as a cofactor.

The enzyme catalyses a tRNA precursor + 2 CTP + ATP = a tRNA with a 3' CCA end + 3 diphosphate. It catalyses the reaction a tRNA with a 3' CCA end + 2 CTP + ATP = a tRNA with a 3' CCACCA end + 3 diphosphate. Catalyzes the addition and repair of the essential 3'-terminal CCA sequence in tRNAs without using a nucleic acid template. Adds these three nucleotides in the order of C, C, and A to the tRNA nucleotide-73, using CTP and ATP as substrates and producing inorganic pyrophosphate. tRNA 3'-terminal CCA addition is required both for tRNA processing and repair. Also involved in tRNA surveillance by mediating tandem CCA addition to generate a CCACCA at the 3' terminus of unstable tRNAs. While stable tRNAs receive only 3'-terminal CCA, unstable tRNAs are marked with CCACCA and rapidly degraded. The polypeptide is Multifunctional CCA protein (Shewanella baltica (strain OS223)).